Consider the following 186-residue polypeptide: Translation initiation factor IF-3 (186 aa).

Belongs to the IF-3 family. As to quaternary structure, monomer.

Its subcellular location is the cytoplasm. Its function is as follows. IF-3 binds to the 30S ribosomal subunit and shifts the equilibrium between 70S ribosomes and their 50S and 30S subunits in favor of the free subunits, thus enhancing the availability of 30S subunits on which protein synthesis initiation begins. This chain is Translation initiation factor IF-3, found in Borreliella burgdorferi (strain ATCC 35210 / DSM 4680 / CIP 102532 / B31) (Borrelia burgdorferi).